We begin with the raw amino-acid sequence, 206 residues long: RNA-binding protein with multiple splicing 2 (206 aa).

S2 is subject to N-acetylserine. The RRM domain maps to 25 to 102; that stretch reads RTLFVSGLPV…QTLRLEFAKA (78 aa). Residues 35–45 form an important for homodimerization region; the sequence is DIKPRELYLLF.

As to quaternary structure, homodimer. Interacts with EEF2.

It is found in the cytoplasm. It localises to the nucleus. The protein resides in the stress granule. Its function is as follows. RNA-binding protein involved in the regulation of smooth muscle cell differentiation and proliferation in the gastrointestinal system. Binds NOG mRNA, the major inhibitor of the bone morphogenetic protein (BMP) pathway. Mediates an increase of NOG mRNA levels, thereby contributing to the negative regulation of BMP signaling pathway and promoting reversible dedifferentiation and proliferation of smooth muscle cells. Acts as a pre-mRNA alternative splicing regulator. Mediates ACTN1 and FLNB alternative splicing. Likely binds to mRNA tandem CAC trinucleotide or CA dinucleotide motifs. This Mus musculus (Mouse) protein is RNA-binding protein with multiple splicing 2 (Rbpms2).